The primary structure comprises 288 residues: ATP synthase gamma chain (288 aa).

Belongs to the ATPase gamma chain family. As to quaternary structure, F-type ATPases have 2 components, CF(1) - the catalytic core - and CF(0) - the membrane proton channel. CF(1) has five subunits: alpha(3), beta(3), gamma(1), delta(1), epsilon(1). CF(0) has three main subunits: a, b and c.

It is found in the cell inner membrane. In terms of biological role, produces ATP from ADP in the presence of a proton gradient across the membrane. The gamma chain is believed to be important in regulating ATPase activity and the flow of protons through the CF(0) complex. This is ATP synthase gamma chain from Rickettsia felis (strain ATCC VR-1525 / URRWXCal2) (Rickettsia azadi).